Here is a 122-residue protein sequence, read N- to C-terminus: Small ribosomal subunit protein uS13 (122 aa).

Residues 95–122 (GLPVRGQRTHTNARTRKGPAKPIAGKKK) form a disordered region.

This sequence belongs to the universal ribosomal protein uS13 family. Part of the 30S ribosomal subunit. Forms a loose heterodimer with protein S19. Forms two bridges to the 50S subunit in the 70S ribosome.

Its function is as follows. Located at the top of the head of the 30S subunit, it contacts several helices of the 16S rRNA. In the 70S ribosome it contacts the 23S rRNA (bridge B1a) and protein L5 of the 50S subunit (bridge B1b), connecting the 2 subunits; these bridges are implicated in subunit movement. Contacts the tRNAs in the A and P-sites. This chain is Small ribosomal subunit protein uS13, found in Rhodospirillum rubrum (strain ATCC 11170 / ATH 1.1.1 / DSM 467 / LMG 4362 / NCIMB 8255 / S1).